The following is a 149-amino-acid chain: Transcriptional repressor NrdR (149 aa).

The segment at 3-34 is a zinc-finger region; sequence CPFCAAVDTKVIDSRLVGDGSQVRRRRQCLVC. The ATP-cone domain occupies 49-139; it reads PRVIKSDEVR…VYRSFEDIRE (91 aa).

Belongs to the NrdR family. Zn(2+) is required as a cofactor.

Negatively regulates transcription of bacterial ribonucleotide reductase nrd genes and operons by binding to NrdR-boxes. This Serratia proteamaculans (strain 568) protein is Transcriptional repressor NrdR.